The following is a 240-amino-acid chain: Ditrans,polycis-undecaprenyl-diphosphate synthase ((2E,6E)-farnesyl-diphosphate specific) (240 aa).

Asp-18 is a catalytic residue. Asp-18 is a Mg(2+) binding site. Residues 19 to 22 (GNGR), Trp-23, Arg-31, His-35, and 63 to 65 (SSE) each bind substrate. Asn-66 acts as the Proton acceptor in catalysis. Residues Trp-67, Arg-69, Arg-186, and 192-194 (RIS) each bind substrate. Glu-205 is a Mg(2+) binding site.

It belongs to the UPP synthase family. In terms of assembly, homodimer. The cofactor is Mg(2+).

It carries out the reaction 8 isopentenyl diphosphate + (2E,6E)-farnesyl diphosphate = di-trans,octa-cis-undecaprenyl diphosphate + 8 diphosphate. In terms of biological role, catalyzes the sequential condensation of isopentenyl diphosphate (IPP) with (2E,6E)-farnesyl diphosphate (E,E-FPP) to yield (2Z,6Z,10Z,14Z,18Z,22Z,26Z,30Z,34E,38E)-undecaprenyl diphosphate (di-trans,octa-cis-UPP). UPP is the precursor of glycosyl carrier lipid in the biosynthesis of bacterial cell wall polysaccharide components such as peptidoglycan and lipopolysaccharide. The polypeptide is Ditrans,polycis-undecaprenyl-diphosphate synthase ((2E,6E)-farnesyl-diphosphate specific) (Pasteurella multocida (strain Pm70)).